The following is a 70-amino-acid chain: Cytochrome c oxidase subunit 8B, mitochondrial (70 aa).

The N-terminal 24 residues, 1–24, are a transit peptide targeting the mitochondrion; the sequence is MLRLAPTVRLLQAPLRGWAVPKAH. Residues 25-35 lie on the Mitochondrial matrix side of the membrane; the sequence is ITAKPAKTPTS. The chain crosses the membrane as a helical span at residues 36 to 59; it reads PKEQAIGLSVTFLSFLLPAGWVLY. The Mitochondrial intermembrane portion of the chain corresponds to 60-70; that stretch reads HLDNYKKSSAA.

The protein belongs to the cytochrome c oxidase VIII family. Component of the cytochrome c oxidase (complex IV, CIV), a multisubunit enzyme composed of 14 subunits. The complex is composed of a catalytic core of 3 subunits MT-CO1, MT-CO2 and MT-CO3, encoded in the mitochondrial DNA, and 11 supernumerary subunits COX4I1 (or COX4I2), COX5A, COX5B, COX6A2 (or COX6A1), COX6B1 (or COX6B2), COX6C, COX7A1 (or COX7A2), COX7B, COX7C, COX8B and NDUFA4, which are encoded in the nuclear genome. The complex exists as a monomer or a dimer and forms supercomplexes (SCs) in the inner mitochondrial membrane with NADH-ubiquinone oxidoreductase (complex I, CI) and ubiquinol-cytochrome c oxidoreductase (cytochrome b-c1 complex, complex III, CIII), resulting in different assemblies (supercomplex SCI(1)III(2)IV(1) and megacomplex MCI(2)III(2)IV(2)).

The protein resides in the mitochondrion inner membrane. Its pathway is energy metabolism; oxidative phosphorylation. In terms of biological role, component of the cytochrome c oxidase, the last enzyme in the mitochondrial electron transport chain which drives oxidative phosphorylation. The respiratory chain contains 3 multisubunit complexes succinate dehydrogenase (complex II, CII), ubiquinol-cytochrome c oxidoreductase (cytochrome b-c1 complex, complex III, CIII) and cytochrome c oxidase (complex IV, CIV), that cooperate to transfer electrons derived from NADH and succinate to molecular oxygen, creating an electrochemical gradient over the inner membrane that drives transmembrane transport and the ATP synthase. Cytochrome c oxidase is the component of the respiratory chain that catalyzes the reduction of oxygen to water. Electrons originating from reduced cytochrome c in the intermembrane space (IMS) are transferred via the dinuclear copper A center (CU(A)) of subunit 2 and heme A of subunit 1 to the active site in subunit 1, a binuclear center (BNC) formed by heme A3 and copper B (CU(B)). The BNC reduces molecular oxygen to 2 water molecules using 4 electrons from cytochrome c in the IMS and 4 protons from the mitochondrial matrix. The protein is Cytochrome c oxidase subunit 8B, mitochondrial (COX8B) of Bos taurus (Bovine).